A 1125-amino-acid polypeptide reads, in one-letter code: Transcription-repair-coupling factor (1125 aa).

Residues 597–758 form the Helicase ATP-binding domain; sequence DMMSFKVMDR…LIKLRDISVL (162 aa). 610 to 617 contacts ATP; it reads GDVGFGKT. A DEEQ box motif is present at residues 711-714; sequence DEEQ. The 160-residue stretch at 774–933 folds into the Helicase C-terminal domain; sequence SFSELLIKHA…GFKIAMKDME (160 aa).

The protein in the N-terminal section; belongs to the UvrB family. In the C-terminal section; belongs to the helicase family. RecG subfamily.

It is found in the cytoplasm. Its function is as follows. Couples transcription and DNA repair by recognizing RNA polymerase (RNAP) stalled at DNA lesions. Mediates ATP-dependent release of RNAP and its truncated transcript from the DNA, and recruitment of nucleotide excision repair machinery to the damaged site. The chain is Transcription-repair-coupling factor from Borreliella burgdorferi (strain ATCC 35210 / DSM 4680 / CIP 102532 / B31) (Borrelia burgdorferi).